A 303-amino-acid polypeptide reads, in one-letter code: Aspartate carbamoyltransferase catalytic subunit (303 aa).

The carbamoyl phosphate site is built by Arg51 and Thr52. Lys80 is an L-aspartate binding site. Arg101, His129, and Gln132 together coordinate carbamoyl phosphate. Positions 162 and 221 each coordinate L-aspartate. The carbamoyl phosphate site is built by Leu260 and Pro261.

It belongs to the aspartate/ornithine carbamoyltransferase superfamily. ATCase family. In terms of assembly, heterooligomer of catalytic and regulatory chains.

The catalysed reaction is carbamoyl phosphate + L-aspartate = N-carbamoyl-L-aspartate + phosphate + H(+). It functions in the pathway pyrimidine metabolism; UMP biosynthesis via de novo pathway; (S)-dihydroorotate from bicarbonate: step 2/3. In terms of biological role, catalyzes the condensation of carbamoyl phosphate and aspartate to form carbamoyl aspartate and inorganic phosphate, the committed step in the de novo pyrimidine nucleotide biosynthesis pathway. The protein is Aspartate carbamoyltransferase catalytic subunit of Saccharolobus islandicus (strain Y.N.15.51 / Yellowstone #2) (Sulfolobus islandicus).